The following is a 264-amino-acid chain: Thymidylate synthase (264 aa).

DUMP is bound by residues arginine 21 and 126–127; that span reads RR. Cysteine 146 (nucleophile) is an active-site residue. Residues 166-169, asparagine 177, and 207-209 each bind dUMP; these read RSAD and HLY. Aspartate 169 lines the (6R)-5,10-methylene-5,6,7,8-tetrahydrofolate pocket. (6R)-5,10-methylene-5,6,7,8-tetrahydrofolate is bound at residue alanine 263.

Belongs to the thymidylate synthase family. Bacterial-type ThyA subfamily. As to quaternary structure, homodimer.

The protein resides in the cytoplasm. It carries out the reaction dUMP + (6R)-5,10-methylene-5,6,7,8-tetrahydrofolate = 7,8-dihydrofolate + dTMP. It participates in pyrimidine metabolism; dTTP biosynthesis. In terms of biological role, catalyzes the reductive methylation of 2'-deoxyuridine-5'-monophosphate (dUMP) to 2'-deoxythymidine-5'-monophosphate (dTMP) while utilizing 5,10-methylenetetrahydrofolate (mTHF) as the methyl donor and reductant in the reaction, yielding dihydrofolate (DHF) as a by-product. This enzymatic reaction provides an intracellular de novo source of dTMP, an essential precursor for DNA biosynthesis. This chain is Thymidylate synthase, found in Bradyrhizobium sp. (strain BTAi1 / ATCC BAA-1182).